Consider the following 273-residue polypeptide: NADH-ubiquinone oxidoreductase 29.9 kDa subunit, mitochondrial (273 aa).

Residues 1–8 (MRAALRLL) constitute a mitochondrion transit peptide.

It belongs to the complex I NDUFA5 subunit family. As to quaternary structure, complex I is composed of about 40 different subunits.

The protein resides in the mitochondrion inner membrane. Its function is as follows. Accessory subunit of the mitochondrial membrane respiratory chain NADH dehydrogenase (Complex I), that is believed not to be involved in catalysis. Complex I functions in the transfer of electrons from NADH to the respiratory chain. The immediate electron acceptor for the enzyme is believed to be ubiquinone. The chain is NADH-ubiquinone oxidoreductase 29.9 kDa subunit, mitochondrial (nuo-32) from Neurospora crassa (strain ATCC 24698 / 74-OR23-1A / CBS 708.71 / DSM 1257 / FGSC 987).